A 493-amino-acid polypeptide reads, in one-letter code: Glutamyl-tRNA(Gln) amidotransferase subunit A (493 aa).

Residues lysine 78 and serine 158 each act as charge relay system in the active site. The active-site Acyl-ester intermediate is the serine 182.

Belongs to the amidase family. GatA subfamily. In terms of assembly, heterotrimer of A, B and C subunits.

It carries out the reaction L-glutamyl-tRNA(Gln) + L-glutamine + ATP + H2O = L-glutaminyl-tRNA(Gln) + L-glutamate + ADP + phosphate + H(+). Functionally, allows the formation of correctly charged Gln-tRNA(Gln) through the transamidation of misacylated Glu-tRNA(Gln) in organisms which lack glutaminyl-tRNA synthetase. The reaction takes place in the presence of glutamine and ATP through an activated gamma-phospho-Glu-tRNA(Gln). The sequence is that of Glutamyl-tRNA(Gln) amidotransferase subunit A from Rickettsia conorii (strain ATCC VR-613 / Malish 7).